The chain runs to 33 residues: SHQDCYEALHKCMASHSKPFSCSMKFHMCLQQQ.

Contains two disulfide bonds. In terms of processing, up to two of the methionines may be oxidized to methionine sulfoxides.

It is found in the secreted. In terms of biological role, has antibacterial activity against Gram-negative bacteria E.coli JM109 and DH5-alpha, H.influenza IID 983, and V.vulnificus RIMD 2219009. Has antibacterial activity against Gram-positive bacteria S.aureus IID 1677, B.subtilis RIMD 0225014 and L.monocytogenes VIU206. Possesses antifungal activity against S.cerevisiae A581A, S.pombe IFO 1628, C.albicans ATCC 36232 and TIMM-1623, and C.tropicalis TIMM-0313. This is Dolabellanin-B2 from Dolabella auricularia (Shoulderblade sea cat).